We begin with the raw amino-acid sequence, 655 residues long: p-hydroxybenzoic acid efflux pump subunit AaeB (655 aa).

Residues 1 to 12 lie on the Periplasmic side of the membrane; the sequence is MGIFSIANQHIR. The helical transmembrane segment at 13-33 threads the bilayer; that stretch reads FAVKLACAIVLALFIGFHFQL. The Cytoplasmic segment spans residues 34-37; that stretch reads ETPR. The chain crosses the membrane as a helical span at residues 38 to 58; it reads WAVLTAAIVAAGPAFAAGGEP. The Periplasmic portion of the chain corresponds to 59-68; it reads YSGAIRYRGM. The chain crosses the membrane as a helical span at residues 69-89; that stretch reads LRIIGTFIGCIAALIIIISMI. The Cytoplasmic portion of the chain corresponds to 90 to 92; that stretch reads RAP. Residues 93 to 113 traverse the membrane as a helical segment; sequence LLMILVCCVWAGFCTWISSLV. Residues 114–120 lie on the Periplasmic side of the membrane; sequence RIENSYA. The chain crosses the membrane as a helical span at residues 121 to 141; that stretch reads WGLSGYTALIIVITIQTEPLL. Over 142–151 the chain is Cytoplasmic; that stretch reads TPQFALERCS. The helical transmembrane segment at 152 to 172 threads the bilayer; sequence EIVIGIGCAILADLLFSPRSI. Topologically, residues 173–369 are periplasmic; it reads KQEVDRELDC…RTTLSCILGT (197 aa). Residues 370 to 390 form a helical membrane-spanning segment; the sequence is LFWLWTGWTSGNGAMVMIAVV. Topologically, residues 391 to 406 are cytoplasmic; that stretch reads TSLAMRLPNPRMVCID. The chain crosses the membrane as a helical span at residues 407–427; it reads FIYGTLAALPLGLLYFLVIIP. Topologically, residues 428-430 are periplasmic; sequence NTQ. A helical membrane pass occupies residues 431 to 451; sequence QSMLLLCLSLAVLGFFIGIEV. At 452-459 the chain is on the cytoplasmic side; it reads QKRRLGSM. A helical membrane pass occupies residues 460–480; the sequence is GALASTINIIVLDNPMTFHFI. A topological domain (periplasmic) is located at residue glutamine 481. Residues 482-502 form a helical membrane-spanning segment; the sequence is FLDSALGQIVGCMLAFIVILL. At 503–655 the chain is on the cytoplasmic side; it reads VRDKSKDRTG…HKYQNALTDS (153 aa).

This sequence belongs to the aromatic acid exporter ArAE (TC 2.A.85) family.

It is found in the cell inner membrane. In terms of biological role, forms an efflux pump with AaeA. Could function as a metabolic relief valve, allowing to eliminate certain compounds when they accumulate to high levels in the cell. The polypeptide is p-hydroxybenzoic acid efflux pump subunit AaeB (Salmonella typhi).